The chain runs to 363 residues: Forkhead box protein I1 (363 aa).

The segment covering 1–18 has biased composition (low complexity); sequence MNPVQQPAQQRSPASSLP. 3 disordered regions span residues 1 to 24, 210 to 269, and 344 to 363; these read MNPV…KRAQ, DNGN…SPPA, and TTAQ…QGRY. The segment at residues 125 to 219 is a DNA-binding region (fork-head); sequence RPPYSYSALI…DNGNFRRKRK (95 aa). Residues 231–243 are compositionally biased toward basic and acidic residues; the sequence is KIGEDHLNPKGKE. Low complexity-rich tracts occupy residues 244 to 258 and 347 to 363; these read SPPM…EPSP and QKQP…QGRY.

The protein resides in the nucleus. Functionally, transcription factor. Essential for ventral specification of the early cephalic (head) ectoderm during gastrulation, playing a role in the 'non-neural' versus 'neural' cell fate choice. Binds to DNA via the target sequence 5'-[AG]TAAA[CT]A-3', with 5'-ATAAACA-3' being the preferred binding site. The polypeptide is Forkhead box protein I1 (Xenopus tropicalis (Western clawed frog)).